The following is a 446-amino-acid chain: ATP synthase subunit b-delta (446 aa).

Residues 1 to 168 (MSTFIGQLVG…PAAADVQYPL (168 aa)) are ATP synthase subunit b. Residues 4-24 (FIGQLVGFAAIVFLVVRYVVP) traverse the membrane as a helical segment. The tract at residues 169–446 (MTKMRSSSRV…LAAAEAQLPD (278 aa)) is ATP synthase subunit delta.

It in the N-terminal section; belongs to the ATPase B chain family. The protein in the C-terminal section; belongs to the ATPase delta chain family. F-type ATPases have 2 components, F(1) - the catalytic core - and F(0) - the membrane proton channel. F(1) has five subunits: alpha(3), beta(3), gamma(1), delta(1), epsilon(1). F(0) has three main subunits: a(1), b(2) and c(10-14). The alpha and beta chains form an alternating ring which encloses part of the gamma chain. F(1) is attached to F(0) by a central stalk formed by the gamma and epsilon chains, while a peripheral stalk is formed by the delta and b chains.

The protein resides in the cell membrane. Functionally, f(1)F(0) ATP synthase produces ATP from ADP in the presence of a proton or sodium gradient. F-type ATPases consist of two structural domains, F(1) containing the extramembraneous catalytic core and F(0) containing the membrane proton channel, linked together by a central stalk and a peripheral stalk. During catalysis, ATP synthesis in the catalytic domain of F(1) is coupled via a rotary mechanism of the central stalk subunits to proton translocation. In terms of biological role, this fusion protein includes a component of the F(0) channel (subunit b) and of the F(1) subunit (subunit delta). Two copies of subunit b and one of delta together form the peripheral 'stator' stalk which links F(1) to F(0). The chain is ATP synthase subunit b-delta (atpFH) from Mycobacterium avium (strain 104).